Consider the following 183-residue polypeptide: uncharacterized protein (183 aa).

The GGDEF domain maps to 55–183; that stretch reads PRAAVLLVDL…RSRRGSRPAR (129 aa).

Functionally, might be involved in pSAM2 replication control. This is an uncharacterized protein from Streptomyces ambofaciens.